The following is a 216-amino-acid chain: 3-isopropylmalate dehydratase small subunit (216 aa).

The protein belongs to the LeuD family. LeuD type 1 subfamily. In terms of assembly, heterodimer of LeuC and LeuD.

It carries out the reaction (2R,3S)-3-isopropylmalate = (2S)-2-isopropylmalate. The protein operates within amino-acid biosynthesis; L-leucine biosynthesis; L-leucine from 3-methyl-2-oxobutanoate: step 2/4. In terms of biological role, catalyzes the isomerization between 2-isopropylmalate and 3-isopropylmalate, via the formation of 2-isopropylmaleate. This chain is 3-isopropylmalate dehydratase small subunit, found in Burkholderia thailandensis (strain ATCC 700388 / DSM 13276 / CCUG 48851 / CIP 106301 / E264).